The chain runs to 527 residues: Flavonoid 3',5'-hydroxylase CYP75B138 (527 aa).

The chain crosses the membrane as a helical span at residues 6–26; the sequence is LDIILFISAIVFLSIYYYNLF. Heme is bound at residue C459.

It belongs to the cytochrome P450 family. It depends on heme as a cofactor. Expressed in young cromes.

Its subcellular location is the membrane. The enzyme catalyses a 3',5'-unsubstituted flavanone + 2 reduced [NADPH--hemoprotein reductase] + 2 O2 = a 3',5'-dihydroxyflavanone + 2 oxidized [NADPH--hemoprotein reductase] + 2 H2O + 2 H(+). It catalyses the reaction (2S)-naringenin + 2 reduced [NADPH--hemoprotein reductase] + 2 O2 = (2S)-dihydrotricetin + 2 oxidized [NADPH--hemoprotein reductase] + 2 H2O + 2 H(+). The catalysed reaction is (2R,3R)-dihydrokaempferol + 2 reduced [NADPH--hemoprotein reductase] + 2 O2 = (2R,3R)-dihydromyricetin + 2 oxidized [NADPH--hemoprotein reductase] + 2 H2O + 2 H(+). It carries out the reaction kaempferol + 2 reduced [NADPH--hemoprotein reductase] + 2 O2 = myricetin + 2 oxidized [NADPH--hemoprotein reductase] + 2 H2O + 2 H(+). It functions in the pathway flavonoid metabolism. Flavonoid 3',5'-hydroxylase that catalyzes the 3'- and 5'-hydroxylation of flavanones, dihydroflavonols and flavonols. Converts narigenin to dihydrotricetin, dihydrokaempferol to dihydromyricetin and kaempferol to myricetin. This is Flavonoid 3',5'-hydroxylase CYP75B138 from Crocosmia x crocosmiiflora (Montbretia).